A 147-amino-acid chain; its full sequence is Globin (147 aa).

S2 bears the N-acetylserine mark. One can recognise a Globin domain in the interval 2-147 (SLSAAEADLA…IIDALKAAGK (146 aa)). H96 serves as a coordination point for heme b.

Belongs to the globin family. As to quaternary structure, monomer.

The polypeptide is Globin (Aplysia limacina (Sea hare)).